The sequence spans 55 residues: Large ribosomal subunit protein bL33 (55 aa).

It belongs to the bacterial ribosomal protein bL33 family.

The polypeptide is Large ribosomal subunit protein bL33 (Buchnera aphidicola subsp. Schizaphis graminum (strain Sg)).